The following is a 337-amino-acid chain: Probable dual-specificity RNA methyltransferase RlmN (337 aa).

Catalysis depends on glutamate 88, which acts as the Proton acceptor. The region spanning 94–324 (SEKRLTVCVS…VRYSRGLATD (231 aa)) is the Radical SAM core domain. Cysteine 101 and cysteine 327 form a disulfide bridge. Residues cysteine 108, cysteine 112, and cysteine 115 each coordinate [4Fe-4S] cluster. S-adenosyl-L-methionine-binding positions include 155-156 (GE), serine 185, 208-210 (SLH), and asparagine 284. Catalysis depends on cysteine 327, which acts as the S-methylcysteine intermediate.

It belongs to the radical SAM superfamily. RlmN family. It depends on [4Fe-4S] cluster as a cofactor.

It is found in the cytoplasm. The enzyme catalyses adenosine(2503) in 23S rRNA + 2 reduced [2Fe-2S]-[ferredoxin] + 2 S-adenosyl-L-methionine = 2-methyladenosine(2503) in 23S rRNA + 5'-deoxyadenosine + L-methionine + 2 oxidized [2Fe-2S]-[ferredoxin] + S-adenosyl-L-homocysteine. It catalyses the reaction adenosine(37) in tRNA + 2 reduced [2Fe-2S]-[ferredoxin] + 2 S-adenosyl-L-methionine = 2-methyladenosine(37) in tRNA + 5'-deoxyadenosine + L-methionine + 2 oxidized [2Fe-2S]-[ferredoxin] + S-adenosyl-L-homocysteine. Its function is as follows. Specifically methylates position 2 of adenine 2503 in 23S rRNA and position 2 of adenine 37 in tRNAs. This chain is Probable dual-specificity RNA methyltransferase RlmN, found in Microcystis aeruginosa (strain NIES-843 / IAM M-2473).